The sequence spans 427 residues: 3-phosphoshikimate 1-carboxyvinyltransferase (427 aa).

3 residues coordinate 3-phosphoshikimate: lysine 22, serine 23, and arginine 27. Phosphoenolpyruvate is bound at residue lysine 22. Positions 96 and 124 each coordinate phosphoenolpyruvate. 3-phosphoshikimate is bound by residues serine 169, serine 170, glutamine 171, serine 197, aspartate 313, asparagine 336, and lysine 340. Glutamine 171 provides a ligand contact to phosphoenolpyruvate. The active-site Proton acceptor is aspartate 313. 3 residues coordinate phosphoenolpyruvate: arginine 344, arginine 386, and lysine 411.

Belongs to the EPSP synthase family. Monomer.

It localises to the cytoplasm. It carries out the reaction 3-phosphoshikimate + phosphoenolpyruvate = 5-O-(1-carboxyvinyl)-3-phosphoshikimate + phosphate. It functions in the pathway metabolic intermediate biosynthesis; chorismate biosynthesis; chorismate from D-erythrose 4-phosphate and phosphoenolpyruvate: step 6/7. Catalyzes the transfer of the enolpyruvyl moiety of phosphoenolpyruvate (PEP) to the 5-hydroxyl of shikimate-3-phosphate (S3P) to produce enolpyruvyl shikimate-3-phosphate and inorganic phosphate. The polypeptide is 3-phosphoshikimate 1-carboxyvinyltransferase (Escherichia coli O6:H1 (strain CFT073 / ATCC 700928 / UPEC)).